Consider the following 147-residue polypeptide: Hemoglobin subunit gamma (147 aa).

In terms of domain architecture, Globin spans 3–147; that stretch reads DFTAEEKAAI…VASAVARKYH (145 aa). Residues histidine 64 and histidine 93 each contribute to the heme b site.

This sequence belongs to the globin family. Heterotetramer of two alpha chains and two gamma chains in fetal hemoglobin (Hb F). Red blood cells.

Gamma chains make up the fetal hemoglobin F, in combination with alpha chains. This chain is Hemoglobin subunit gamma (HBG), found in Trichechus manatus (Caribbean manatee).